The primary structure comprises 138 residues: Large ribosomal subunit protein bL19 (138 aa).

Belongs to the bacterial ribosomal protein bL19 family.

Functionally, this protein is located at the 30S-50S ribosomal subunit interface and may play a role in the structure and function of the aminoacyl-tRNA binding site. The sequence is that of Large ribosomal subunit protein bL19 from Rickettsia felis (strain ATCC VR-1525 / URRWXCal2) (Rickettsia azadi).